The sequence spans 302 residues: Methionyl-tRNA formyltransferase (302 aa).

106 to 109 (SVLP) serves as a coordination point for (6S)-5,6,7,8-tetrahydrofolate.

Belongs to the Fmt family.

The enzyme catalyses L-methionyl-tRNA(fMet) + (6R)-10-formyltetrahydrofolate = N-formyl-L-methionyl-tRNA(fMet) + (6S)-5,6,7,8-tetrahydrofolate + H(+). Functionally, attaches a formyl group to the free amino group of methionyl-tRNA(fMet). The formyl group appears to play a dual role in the initiator identity of N-formylmethionyl-tRNA by promoting its recognition by IF2 and preventing the misappropriation of this tRNA by the elongation apparatus. The protein is Methionyl-tRNA formyltransferase of Hydrogenobaculum sp. (strain Y04AAS1).